Reading from the N-terminus, the 235-residue chain is NAD-dependent protein deacylase (235 aa).

In terms of domain architecture, Deacetylase sirtuin-type spans 1 to 235 (MDLRLFKNIV…VPRFITQFLE (235 aa)). 14–33 (GAGISAESGIRTFRDQDGLW) serves as a coordination point for NAD(+). Residues Y58 and R61 each contribute to the substrate site. Residue 95–98 (QNVD) coordinates NAD(+). H113 (proton acceptor) is an active-site residue. C121, C124, C140, and C143 together coordinate Zn(2+). NAD(+)-binding positions include 180 to 182 (GTS), 204 to 206 (NLK), and A222.

It belongs to the sirtuin family. Class III subfamily. The cofactor is Zn(2+).

It is found in the cytoplasm. It catalyses the reaction N(6)-acetyl-L-lysyl-[protein] + NAD(+) + H2O = 2''-O-acetyl-ADP-D-ribose + nicotinamide + L-lysyl-[protein]. The catalysed reaction is N(6)-succinyl-L-lysyl-[protein] + NAD(+) + H2O = 2''-O-succinyl-ADP-D-ribose + nicotinamide + L-lysyl-[protein]. Functionally, NAD-dependent lysine deacetylase and desuccinylase that specifically removes acetyl and succinyl groups on target proteins. Modulates the activities of several proteins which are inactive in their acylated form. This chain is NAD-dependent protein deacylase, found in Bdellovibrio bacteriovorus (strain ATCC 15356 / DSM 50701 / NCIMB 9529 / HD100).